We begin with the raw amino-acid sequence, 350 residues long: DNA polymerase IV (350 aa).

The UmuC domain maps to 7-188 (IIHIDMDYFF…LPVKKLFGVG (182 aa)). Mg(2+) contacts are provided by D11 and D106. E107 is a catalytic residue.

The protein belongs to the DNA polymerase type-Y family. As to quaternary structure, monomer. The cofactor is Mg(2+).

Its subcellular location is the cytoplasm. It carries out the reaction DNA(n) + a 2'-deoxyribonucleoside 5'-triphosphate = DNA(n+1) + diphosphate. Functionally, poorly processive, error-prone DNA polymerase involved in untargeted mutagenesis. Copies undamaged DNA at stalled replication forks, which arise in vivo from mismatched or misaligned primer ends. These misaligned primers can be extended by PolIV. Exhibits no 3'-5' exonuclease (proofreading) activity. May be involved in translesional synthesis, in conjunction with the beta clamp from PolIII. This is DNA polymerase IV from Francisella philomiragia subsp. philomiragia (strain ATCC 25017 / CCUG 19701 / FSC 153 / O#319-036).